The chain runs to 393 residues: Branched-chain-amino-acid aminotransferase, mitochondrial (393 aa).

A mitochondrion-targeting transit peptide spans 1–27 (MSAAILGQVWTRKLLPIPWRLCVPGRC). Tyrosine 169 lines the substrate pocket. An N6-(pyridoxal phosphate)lysine modification is found at lysine 230. Lysine 322 is subject to N6-acetyllysine.

It belongs to the class-IV pyridoxal-phosphate-dependent aminotransferase family. In terms of assembly, homodimer. Pyridoxal 5'-phosphate serves as cofactor. Expressed in all tissues.

It localises to the mitochondrion. It catalyses the reaction L-leucine + 2-oxoglutarate = 4-methyl-2-oxopentanoate + L-glutamate. The catalysed reaction is L-isoleucine + 2-oxoglutarate = (S)-3-methyl-2-oxopentanoate + L-glutamate. It carries out the reaction L-valine + 2-oxoglutarate = 3-methyl-2-oxobutanoate + L-glutamate. Catalyzes the first reaction in the catabolism of the essential branched chain amino acids leucine, isoleucine, and valine. May also function as a transporter of branched chain alpha-keto acids. The polypeptide is Branched-chain-amino-acid aminotransferase, mitochondrial (Bcat2) (Rattus norvegicus (Rat)).